Here is a 214-residue protein sequence, read N- to C-terminus: Probable septum site-determining protein MinC (214 aa).

The protein belongs to the MinC family. Interacts with MinD and FtsZ.

Functionally, cell division inhibitor that blocks the formation of polar Z ring septums. Rapidly oscillates between the poles of the cell to destabilize FtsZ filaments that have formed before they mature into polar Z rings. Prevents FtsZ polymerization. The polypeptide is Probable septum site-determining protein MinC (Caldanaerobacter subterraneus subsp. tengcongensis (strain DSM 15242 / JCM 11007 / NBRC 100824 / MB4) (Thermoanaerobacter tengcongensis)).